A 182-amino-acid polypeptide reads, in one-letter code: Large ribosomal subunit protein uL5 (182 aa).

This sequence belongs to the universal ribosomal protein uL5 family. As to quaternary structure, part of the 50S ribosomal subunit; part of the 5S rRNA/L5/L18/L25 subcomplex. Contacts the 5S rRNA and the P site tRNA. Forms a bridge to the 30S subunit in the 70S ribosome.

Functionally, this is one of the proteins that bind and probably mediate the attachment of the 5S RNA into the large ribosomal subunit, where it forms part of the central protuberance. In the 70S ribosome it contacts protein S13 of the 30S subunit (bridge B1b), connecting the 2 subunits; this bridge is implicated in subunit movement. Contacts the P site tRNA; the 5S rRNA and some of its associated proteins might help stabilize positioning of ribosome-bound tRNAs. This Borrelia hermsii (strain HS1 / DAH) protein is Large ribosomal subunit protein uL5.